A 259-amino-acid polypeptide reads, in one-letter code: UBX domain-containing protein 2A (259 aa).

The interval 1-151 is required for interaction with CHRNA3; that stretch reads MKDVDNLKSI…SATPKIVSKA (151 aa). Residues 1–164 are required for inhibition of CHRNA3 ubiquitination and translocation of CHRNA3 to the plasma membrane resulting in an increase in acetylcholine-gated nicotinic acetylcholine receptor currents; sequence MKDVDNLKSI…EVENKNNLSA (164 aa). The SEP domain maps to 60-124; it reads QVDVNIKLWK…VEDKKNEICL (65 aa). The interval 167–259 is required for interaction with VCP; the sequence is LNNLEPITNI…TASFRELSEH (93 aa). A UBX domain is found at 169–246; that stretch reads NLEPITNIQI…DLQNAVIIQR (78 aa).

In terms of assembly, part of a complex composed of STUB1/CHIP, VCP/p97, CHRNA3, and UBXN2A that modulates the ubiquitination and endoplasmic reticulum-associated degradation (ERAD) of CHRNA3. Within the complex UBXN2A acts as a scaffold protein required for the interaction of CHRNA3 with VCP/p97, this interaction also inhibits CHRNA3 ubiquitination by STUB1/CHIP and subsequently ERAD. Interacts (via SEP domain) with CHRNA3 and interacts (via UBX domain) with VCP/P97; these interactions are required for the interaction of CHRNA3 with the STUB1-VCP-UBXN2A complex. Interacts with HSPA9/MOT-2 (via SBD domain); the interaction inhibits HSPA9/MOT-2 interaction with and degradation of p53, thereby promotes p53 translocation to the nucleus. Interacts with RICTOR. Post-translationally, ubiquitinated. In terms of tissue distribution, expressed in the colon (at protein level).

Its subcellular location is the golgi apparatus. The protein localises to the endoplasmic reticulum. It is found in the perikaryon. The protein resides in the cell projection. It localises to the dendrite. Its subcellular location is the nucleus. The protein localises to the cytoplasm. Functionally, acts to repress the ubiquitination and subsequent endoplasmic reticulum-associated degradation of CHRNA3 by the STUB1-VCP-UBXN2A complex in cortical neurons. Also acts to promote the translocation of CHRNA3 to the plasma membrane and subsequently increases plasma membrane acetylcholine-gated ion-channel activation. Plays a role in the inhibition of STUB1-mediated TP53 degradation, via its interaction with HSPA9 which acts to inhibit TP53 binding to HSPA9. Positively mediates the ubiquitination and proteosomal degradation of RICTOR, may thereby act as a negative regulator of the mTORC2 pathway. This Homo sapiens (Human) protein is UBX domain-containing protein 2A.